Consider the following 360-residue polypeptide: Spermidine/putrescine-binding periplasmic protein 1 (360 aa).

Positions 1–16 (MKKFAGLITASFVAAT) are cleaved as a signal peptide.

Belongs to the bacterial solute-binding protein PotD/PotF family.

It is found in the periplasm. Functionally, required for the activity of the bacterial periplasmic transport system of putrescine and spermidine. Polyamine binding protein. The chain is Spermidine/putrescine-binding periplasmic protein 1 (potD-B) from Haemophilus influenzae (strain ATCC 51907 / DSM 11121 / KW20 / Rd).